A 355-amino-acid polypeptide reads, in one-letter code: Peptide chain release factor 1 (355 aa).

The residue at position 231 (Gln231) is an N5-methylglutamine. The interval 283-303 (NAQNKEARKTQVGSGDRSERI) is disordered.

It belongs to the prokaryotic/mitochondrial release factor family. Post-translationally, methylated by PrmC. Methylation increases the termination efficiency of RF1.

It localises to the cytoplasm. In terms of biological role, peptide chain release factor 1 directs the termination of translation in response to the peptide chain termination codons UAG and UAA. The chain is Peptide chain release factor 1 from Helicobacter hepaticus (strain ATCC 51449 / 3B1).